The chain runs to 452 residues: Adenylosuccinate synthetase (452 aa).

GTP is bound by residues 40-46 and 68-70; these read GDEGKGK and GHT. Asp41 functions as the Proton acceptor in the catalytic mechanism. Mg(2+) contacts are provided by Asp41 and Gly68. IMP is bound by residues 41–44, 66–69, Thr158, Arg172, Asn250, Thr265, and Arg329; these read DEGK and NAGH. His69 serves as the catalytic Proton donor. Residue 325 to 331 participates in substrate binding; the sequence is VTTKRKR. Residues Arg331, 357 to 359, and 440 to 442 contribute to the GTP site; these read KLD and GVG.

This sequence belongs to the adenylosuccinate synthetase family. Homodimer. Requires Mg(2+) as cofactor.

It is found in the cytoplasm. The enzyme catalyses IMP + L-aspartate + GTP = N(6)-(1,2-dicarboxyethyl)-AMP + GDP + phosphate + 2 H(+). The protein operates within purine metabolism; AMP biosynthesis via de novo pathway; AMP from IMP: step 1/2. Functionally, plays an important role in the de novo pathway and in the salvage pathway of purine nucleotide biosynthesis. Catalyzes the first committed step in the biosynthesis of AMP from IMP. This Drosophila grimshawi (Hawaiian fruit fly) protein is Adenylosuccinate synthetase.